Reading from the N-terminus, the 185-residue chain is Elongation factor P (185 aa).

This sequence belongs to the elongation factor P family.

Its subcellular location is the cytoplasm. Its pathway is protein biosynthesis; polypeptide chain elongation. Involved in peptide bond synthesis. Stimulates efficient translation and peptide-bond synthesis on native or reconstituted 70S ribosomes in vitro. Probably functions indirectly by altering the affinity of the ribosome for aminoacyl-tRNA, thus increasing their reactivity as acceptors for peptidyl transferase. This is Elongation factor P from Nitratidesulfovibrio vulgaris (strain DP4) (Desulfovibrio vulgaris).